We begin with the raw amino-acid sequence, 449 residues long: Tryptophan synthase beta chain 2 (449 aa).

K116 bears the N6-(pyridoxal phosphate)lysine mark.

It belongs to the TrpB family. Tetramer of two alpha and two beta chains. Pyridoxal 5'-phosphate is required as a cofactor.

It catalyses the reaction (1S,2R)-1-C-(indol-3-yl)glycerol 3-phosphate + L-serine = D-glyceraldehyde 3-phosphate + L-tryptophan + H2O. The protein operates within amino-acid biosynthesis; L-tryptophan biosynthesis; L-tryptophan from chorismate: step 5/5. Functionally, the beta subunit is responsible for the synthesis of L-tryptophan from indole and L-serine. This chain is Tryptophan synthase beta chain 2 (trpB2), found in Aeropyrum pernix (strain ATCC 700893 / DSM 11879 / JCM 9820 / NBRC 100138 / K1).